Here is a 385-residue protein sequence, read N- to C-terminus: tRNA 2-selenouridine synthase (385 aa).

The region spanning 15–138 (FIADTPLIDV…ARQFLISTID (124 aa)) is the Rhodanese domain. Catalysis depends on C98, which acts as the S-selanylcysteine intermediate.

This sequence belongs to the SelU family. In terms of assembly, monomer.

The enzyme catalyses 5-methylaminomethyl-2-thiouridine(34) in tRNA + selenophosphate + (2E)-geranyl diphosphate + H2O + H(+) = 5-methylaminomethyl-2-selenouridine(34) in tRNA + (2E)-thiogeraniol + phosphate + diphosphate. It carries out the reaction 5-methylaminomethyl-2-thiouridine(34) in tRNA + (2E)-geranyl diphosphate = 5-methylaminomethyl-S-(2E)-geranyl-thiouridine(34) in tRNA + diphosphate. It catalyses the reaction 5-methylaminomethyl-S-(2E)-geranyl-thiouridine(34) in tRNA + selenophosphate + H(+) = 5-methylaminomethyl-2-(Se-phospho)selenouridine(34) in tRNA + (2E)-thiogeraniol. The catalysed reaction is 5-methylaminomethyl-2-(Se-phospho)selenouridine(34) in tRNA + H2O = 5-methylaminomethyl-2-selenouridine(34) in tRNA + phosphate. In terms of biological role, involved in the post-transcriptional modification of the uridine at the wobble position (U34) of tRNA(Lys), tRNA(Glu) and tRNA(Gln). Catalyzes the conversion of 2-thiouridine (S2U-RNA) to 2-selenouridine (Se2U-RNA). Acts in a two-step process involving geranylation of 2-thiouridine (S2U) to S-geranyl-2-thiouridine (geS2U) and subsequent selenation of the latter derivative to 2-selenouridine (Se2U) in the tRNA chain. The polypeptide is tRNA 2-selenouridine synthase (Nitrosomonas europaea (strain ATCC 19718 / CIP 103999 / KCTC 2705 / NBRC 14298)).